Consider the following 802-residue polypeptide: Oligophrenin-1 (802 aa).

The region spanning 265 to 368 (QPTIEGYLYT…WMEAMDGKEP (104 aa)) is the PH domain. A Rho-GAP domain is found at 380 to 564 (MELNEVGFKF…ILIEHFGKIY (185 aa)). 2 disordered regions span residues 606 to 665 (SLDE…SEPC) and 681 to 802 (GTKA…GDES). Residues 617-627 (QTPNGTITSNL) are compositionally biased toward polar residues. Residues 716–732 (HHKEGDTDGFSKVRPPG) show a composition bias toward basic and acidic residues.

In terms of assembly, interacts with HOMER1. Interacts with AMPA receptor complexes. Interacts with SH3GL2 (endophilin-A1). Interacts (via C-terminus) with NR1D1.

It localises to the postsynapse. The protein localises to the presynapse. It is found in the cell projection. The protein resides in the axon. Its subcellular location is the dendritic spine. It localises to the dendrite. The protein localises to the cytoplasm. Stimulates GTP hydrolysis of members of the Rho family. Its action on RHOA activity and signaling is implicated in growth and stabilization of dendritic spines, and therefore in synaptic function. Critical for the stabilization of AMPA receptors at postsynaptic sites. Critical for the regulation of synaptic vesicle endocytosis at presynaptic terminals. Required for the localization of NR1D1 to dendrites, can suppress its repressor activity and protect it from proteasomal degradation. This is Oligophrenin-1 (Ophn1) from Mus musculus (Mouse).